We begin with the raw amino-acid sequence, 403 residues long: F-box only protein 22 (403 aa).

An N-acetylmethionine modification is found at Met-1. Residues 21–67 (FVLSNLAEVVERVLTFLPAKALLRVACVCRLWRECVRRVLRTHRSVT) form the F-box domain. A Phosphothreonine modification is found at Thr-127. Ser-128 carries the post-translational modification Phosphoserine. Residue Lys-194 is modified to N6-acetyllysine.

As to quaternary structure, directly interacts with SKP1 and CUL1. Interacts (via C-terminal) with KDM4A. Interacts with TP53. Interacts with MTOR; this interaction promotes 'lys-27'-linked ubiquitination of MTOR. In terms of assembly, (Microbial infection) Interacts with SARS_COV-2 protein NSP5; this interaction attenuates NSP5-mediated inhibition of innate immunity. Post-translationally, phosphorylated by EIF2AK4 at Thr-127 causes cytoplasmic retention of FBXO22. As to expression, predominantly expressed in liver, also enriched in cardiac muscle.

It localises to the cytoplasm. The protein localises to the nucleus. Its subcellular location is the myofibril. The protein resides in the sarcomere. It is found in the z line. In terms of biological role, substrate-recognition component of the SCF (SKP1-CUL1-F-box protein)-type E3 ubiquitin ligase complex that is implicated in the control of various cellular processes such as cell cycle control, transcriptional regulation, DNA damage repair, and apoptosis. Promotes the proteasome-dependent degradation of key sarcomeric proteins, such as alpha-actinin (ACTN2) and filamin-C (FLNC), essential for maintenance of normal contractile function. Acts as a key regulator of histone methylation marks namely H3K9 and H3K36 methylation through the regulation of histone demethylase KDM4A protein levels. In complex with KDM4A, also regulates the abundance of TP53 by targeting methylated TP53 for degradation at the late senescent stage. Under oxidative stress, promotes the ubiquitination and degradation of BACH1. Mechanistically, reactive oxygen species (ROS) covalently modify cysteine residues on the bZIP domain of BACH1, leading to its release from chromatin and making it accessible to FBXO22. Upon amino acid depletion, mediates 'Lys-27'-linked ubiquitination of MTOR and thereby inhibits substrate recruitment to mTORC1. Also inhibits SARS-CoV-2 replication by inducing NSP5 degradation. This Homo sapiens (Human) protein is F-box only protein 22 (FBXO22).